We begin with the raw amino-acid sequence, 704 residues long: Elongation factor G (704 aa).

Residues 8-291 enclose the tr-type G domain; it reads DKVRNIGIMA…AVVEYLASPV (284 aa). Residues 17-24, 90-94, and 144-147 contribute to the GTP site; these read AHIDAGKT, DTPGH, and NKMD.

This sequence belongs to the TRAFAC class translation factor GTPase superfamily. Classic translation factor GTPase family. EF-G/EF-2 subfamily.

The protein resides in the cytoplasm. In terms of biological role, catalyzes the GTP-dependent ribosomal translocation step during translation elongation. During this step, the ribosome changes from the pre-translocational (PRE) to the post-translocational (POST) state as the newly formed A-site-bound peptidyl-tRNA and P-site-bound deacylated tRNA move to the P and E sites, respectively. Catalyzes the coordinated movement of the two tRNA molecules, the mRNA and conformational changes in the ribosome. The chain is Elongation factor G from Chlorobium limicola (strain DSM 245 / NBRC 103803 / 6330).